Here is a 179-residue protein sequence, read N- to C-terminus: Putative mediator of RNA polymerase II transcription subunit 28 (179 aa).

Residues 81–119 (SAEKNKIQLKQEIYKVKKEIENKDRLIERYKNKVKEWKY) are a coiled coil.

This sequence belongs to the Mediator complex subunit 28 family. In terms of assembly, component of the Mediator complex.

It is found in the nucleus. In terms of biological role, component of the Mediator complex, a coactivator involved in the regulated transcription of nearly all RNA polymerase II-dependent genes. Mediator functions as a bridge to convey information from gene-specific regulatory proteins to the basal RNA polymerase II transcription machinery. Mediator is recruited to promoters by direct interactions with regulatory proteins and serves as a scaffold for the assembly of a functional preinitiation complex with RNA polymerase II and the general transcription factors. The polypeptide is Putative mediator of RNA polymerase II transcription subunit 28 (med28) (Dictyostelium discoideum (Social amoeba)).